Consider the following 146-residue polypeptide: Large ribosomal subunit protein uL15 (146 aa).

The tract at residues 1-54 (MTIKLHDLRPAPGSKTPRTRVGRGEGSKGKTAGRGTKGTKARKQVPTTFEGGQM) is disordered.

This sequence belongs to the universal ribosomal protein uL15 family. As to quaternary structure, part of the 50S ribosomal subunit.

Functionally, binds to the 23S rRNA. This Mycobacterium marinum (strain ATCC BAA-535 / M) protein is Large ribosomal subunit protein uL15.